We begin with the raw amino-acid sequence, 205 residues long: Non-specific lipid transfer protein GPI-anchored 21 (205 aa).

Residues 1–27 (MNSNSFLISAALIFSLLSSNSPTSILA) form the signal peptide. Intrachain disulfides connect Cys33/Cys75, Cys44/Cys59, Cys60/Cys100, and Cys73/Cys109. The N-linked (GlcNAc...) asparagine glycan is linked to Asn89. Positions 116-182 (LPTPGPASFG…FAPPPPSSSP (67 aa)) are disordered. Positions 126–156 (PTTSPTDSQTSDPEGSASFRPPTSPTTSQTP) are enriched in low complexity. Ser179 is lipidated: GPI-anchor amidated serine. Residues 180–205 (SSPSSSHSLKLSYLLFAFAFTIIKFI) constitute a propeptide, removed in mature form.

It belongs to the plant LTP family.

The protein resides in the cell membrane. Functionally, probable lipid transfer protein. The chain is Non-specific lipid transfer protein GPI-anchored 21 from Arabidopsis thaliana (Mouse-ear cress).